A 453-amino-acid chain; its full sequence is Phosphoglucosamine mutase (453 aa).

Serine 105 (phosphoserine intermediate) is an active-site residue. Residues serine 105, aspartate 244, aspartate 246, and aspartate 248 each contribute to the Mg(2+) site. Position 105 is a phosphoserine (serine 105).

This sequence belongs to the phosphohexose mutase family. Requires Mg(2+) as cofactor. Post-translationally, activated by phosphorylation.

It carries out the reaction alpha-D-glucosamine 1-phosphate = D-glucosamine 6-phosphate. Its function is as follows. Catalyzes the conversion of glucosamine-6-phosphate to glucosamine-1-phosphate. The protein is Phosphoglucosamine mutase of Chromohalobacter salexigens (strain ATCC BAA-138 / DSM 3043 / CIP 106854 / NCIMB 13768 / 1H11).